Reading from the N-terminus, the 92-residue chain is Acylphosphatase (92 aa).

In terms of domain architecture, Acylphosphatase-like spans 5–92 (ATAAYVYGVV…TDYKGFTIRY (88 aa)). Catalysis depends on residues arginine 20 and asparagine 38.

It belongs to the acylphosphatase family.

It catalyses the reaction an acyl phosphate + H2O = a carboxylate + phosphate + H(+). The sequence is that of Acylphosphatase (acyP) from Pectobacterium atrosepticum (strain SCRI 1043 / ATCC BAA-672) (Erwinia carotovora subsp. atroseptica).